The sequence spans 335 residues: ATP-dependent 6-phosphofructokinase (335 aa).

ATP is bound at residue Gly-11. 21-25 (RAVVR) serves as a coordination point for ADP. ATP is bound by residues 72–73 (RY) and 102–105 (GDGS). Position 103 (Asp-103) interacts with Mg(2+). 125–127 (TID) serves as a coordination point for substrate. Asp-127 acts as the Proton acceptor in catalysis. Arg-154 provides a ligand contact to ADP. Substrate-binding positions include Arg-162 and 169 to 171 (MGR). Residues 185-187 (GAD) and 213-215 (KKH) each bind ADP. Substrate contacts are provided by residues Glu-222, Arg-244, and 250-253 (HIQR).

This sequence belongs to the phosphofructokinase type A (PFKA) family. ATP-dependent PFK group I subfamily. Prokaryotic clade 'B1' sub-subfamily. In terms of assembly, homotetramer. It depends on Mg(2+) as a cofactor.

It is found in the cytoplasm. It catalyses the reaction beta-D-fructose 6-phosphate + ATP = beta-D-fructose 1,6-bisphosphate + ADP + H(+). The protein operates within carbohydrate degradation; glycolysis; D-glyceraldehyde 3-phosphate and glycerone phosphate from D-glucose: step 3/4. Allosterically activated by ADP and other diphosphonucleosides, and allosterically inhibited by phosphoenolpyruvate. Catalyzes the phosphorylation of D-fructose 6-phosphate to fructose 1,6-bisphosphate by ATP, the first committing step of glycolysis. The protein is ATP-dependent 6-phosphofructokinase of Streptococcus pneumoniae serotype 4 (strain ATCC BAA-334 / TIGR4).